Reading from the N-terminus, the 224-residue chain is Deoxyribose-phosphate aldolase (224 aa).

The Proton donor/acceptor role is filled by Asp94. The active-site Schiff-base intermediate with acetaldehyde is the Lys158. Lys187 (proton donor/acceptor) is an active-site residue.

Belongs to the DeoC/FbaB aldolase family. DeoC type 1 subfamily. Homodimer.

The protein localises to the cytoplasm. It carries out the reaction 2-deoxy-D-ribose 5-phosphate = D-glyceraldehyde 3-phosphate + acetaldehyde. Activated by citrate. Inhibited by NaBH(4). Activity is independent of divalent metal cations. Catalyzes a reversible aldol reaction between acetaldehyde and D-glyceraldehyde 3-phosphate to generate 2-deoxy-D-ribose 5-phosphate. Could be involved in pentose biosynthesis. The protein is Deoxyribose-phosphate aldolase of Thermococcus kodakarensis (strain ATCC BAA-918 / JCM 12380 / KOD1) (Pyrococcus kodakaraensis (strain KOD1)).